A 278-amino-acid polypeptide reads, in one-letter code: Pantothenate synthetase (278 aa).

31 to 38 is an ATP binding site; the sequence is MGALHEGH. His38 serves as the catalytic Proton donor. A (R)-pantoate-binding site is contributed by Gln62. Gln62 is a binding site for beta-alanine. 148–151 contacts ATP; the sequence is GEKD. Gln154 lines the (R)-pantoate pocket. Residues Leu177 and 185–188 each bind ATP; that span reads MSSR.

Belongs to the pantothenate synthetase family. Homodimer.

The protein resides in the cytoplasm. It carries out the reaction (R)-pantoate + beta-alanine + ATP = (R)-pantothenate + AMP + diphosphate + H(+). It participates in cofactor biosynthesis; (R)-pantothenate biosynthesis; (R)-pantothenate from (R)-pantoate and beta-alanine: step 1/1. In terms of biological role, catalyzes the condensation of pantoate with beta-alanine in an ATP-dependent reaction via a pantoyl-adenylate intermediate. The chain is Pantothenate synthetase from Acidiphilium cryptum (strain JF-5).